We begin with the raw amino-acid sequence, 72 residues long: ATP synthase subunit c (72 aa).

2 helical membrane passes run 1 to 21 (MSLGVLAAAIAVGLGALGAGI) and 48 to 68 (MFIGVALVEALPIIGVVFSFI).

This sequence belongs to the ATPase C chain family. As to quaternary structure, F-type ATPases have 2 components, F(1) - the catalytic core - and F(0) - the membrane proton channel. F(1) has five subunits: alpha(3), beta(3), gamma(1), delta(1), epsilon(1). F(0) has three main subunits: a(1), b(2) and c(10-14). The alpha and beta chains form an alternating ring which encloses part of the gamma chain. F(1) is attached to F(0) by a central stalk formed by the gamma and epsilon chains, while a peripheral stalk is formed by the delta and b chains.

It is found in the cell membrane. Functionally, f(1)F(0) ATP synthase produces ATP from ADP in the presence of a proton or sodium gradient. F-type ATPases consist of two structural domains, F(1) containing the extramembraneous catalytic core and F(0) containing the membrane proton channel, linked together by a central stalk and a peripheral stalk. During catalysis, ATP synthesis in the catalytic domain of F(1) is coupled via a rotary mechanism of the central stalk subunits to proton translocation. Key component of the F(0) channel; it plays a direct role in translocation across the membrane. A homomeric c-ring of between 10-14 subunits forms the central stalk rotor element with the F(1) delta and epsilon subunits. The protein is ATP synthase subunit c of Geobacillus stearothermophilus (Bacillus stearothermophilus).